A 347-amino-acid polypeptide reads, in one-letter code: MSEGEGQAKNRLFLGIDLGTSHTAVMSSRGKKFLLKSVVGYPKDVIGLKLLGRPYVVGDEAFEMRSYLDIRYPLQDGVLSEISDRDIEVARHLLTHVVKSAEPGPNDEICAVIGVPARASAANKALLLKMAQEVVHTALVVSEPFMVGYGLDKLINTIIVDIGAGTTDICALKGTVPGPEDQVTLTKAGNYVDERLQNAILERHPELQMNVNVACAVKEQFSFVGTPTEVASFEFRAAGKPVRADVTEPVKIACEALMPDIIESIETLLRSFQPEYQATVLQNIVFAGGGSRIRGLAAYVKEKLRPFGDANVTCVKDPTFDGCRGALRLAEELPPQYWRQLGDVSGS.

Residues Lys9, 20-21 (TS), and Asp76 contribute to the ATP site. Glu143 serves as a coordination point for Mg(2+). ATP contacts are provided by residues 164–166 (AGT), 218–222 (KEQFS), and Gly289.

Belongs to the FtsA/MreB family. MamK subfamily. Forms cytoplasmic filaments. Filaments are parallel (polar) and double-helical. MamK subunits from each of the two strands are juxtaposed, each monomer binds ADP. At cell poles and septa interacts with methyl-accepting chemotaxis protein Amb0944 (MCP10). Forms filaments with MamK-like protein.

Its subcellular location is the cytoplasm. The protein resides in the cytoskeleton. It localises to the magnetosome membrane. It catalyses the reaction ATP + H2O = ADP + phosphate + H(+). Its activity is regulated as follows. Filament turnover is promoted by MamJ and/or LimJ which have overlapping function; at least one other protein is required for turnover. MamK filament dynamics are probably required for the assembly or maintenance of the magnetosome chain. In terms of biological role, protein with ATPase activity which forms dynamic cytoplasmic filaments (probably with paralog MamK-like) that organize magnetosomes into long chains running parallel to the long axis of the cell. Turnover of MamK filaments is probably promoted by MamK-like, which provides a monomer pool. Forms twisted filaments in the presence of ATP or GTP. Serves to close gaps between magnetosomes in the chain. Interaction with MCP10 is involved in controlling the response to magnetic fields, possibly by controlling flagellar rotation. Expression in E.coli yields a filament in the cell's longitudinal axis; the protein nucleates at several sites and one extremity of the filament is located at the cell pole. The protein is Actin-like protein MamK (mamK) of Paramagnetospirillum magneticum (strain ATCC 700264 / AMB-1) (Magnetospirillum magneticum).